A 647-amino-acid polypeptide reads, in one-letter code: tRNA uridine 5-carboxymethylaminomethyl modification enzyme MnmG (647 aa).

Residues 22 to 27 (GAGHAG), valine 134, and serine 189 each bind FAD. 283–297 (GARYCPSIEDKIMRF) provides a ligand contact to NAD(+). Position 380 (glutamine 380) interacts with FAD.

The protein belongs to the MnmG family. As to quaternary structure, homodimer. Heterotetramer of two MnmE and two MnmG subunits. FAD serves as cofactor.

The protein resides in the cytoplasm. Functionally, NAD-binding protein involved in the addition of a carboxymethylaminomethyl (cmnm) group at the wobble position (U34) of certain tRNAs, forming tRNA-cmnm(5)s(2)U34. In Desulfotalea psychrophila (strain LSv54 / DSM 12343), this protein is tRNA uridine 5-carboxymethylaminomethyl modification enzyme MnmG.